The sequence spans 705 residues: Ribosomal RNA large subunit methyltransferase K/L (705 aa).

A THUMP domain is found at Leu-42–Tyr-154.

Belongs to the methyltransferase superfamily. RlmKL family.

The protein resides in the cytoplasm. The catalysed reaction is guanosine(2445) in 23S rRNA + S-adenosyl-L-methionine = N(2)-methylguanosine(2445) in 23S rRNA + S-adenosyl-L-homocysteine + H(+). The enzyme catalyses guanosine(2069) in 23S rRNA + S-adenosyl-L-methionine = N(2)-methylguanosine(2069) in 23S rRNA + S-adenosyl-L-homocysteine + H(+). Its function is as follows. Specifically methylates the guanine in position 2445 (m2G2445) and the guanine in position 2069 (m7G2069) of 23S rRNA. The sequence is that of Ribosomal RNA large subunit methyltransferase K/L from Pseudoalteromonas translucida (strain TAC 125).